A 391-amino-acid polypeptide reads, in one-letter code: Phosphoglycerate kinase (391 aa).

Substrate-binding positions include 21–23, Arg-36, 59–62, Arg-113, and Arg-146; these read DLN and HLGR. Residues Lys-197, Glu-319, and 345 to 348 each bind ATP; that span reads GGDT.

Belongs to the phosphoglycerate kinase family. As to quaternary structure, monomer.

It localises to the cytoplasm. The enzyme catalyses (2R)-3-phosphoglycerate + ATP = (2R)-3-phospho-glyceroyl phosphate + ADP. It participates in carbohydrate degradation; glycolysis; pyruvate from D-glyceraldehyde 3-phosphate: step 2/5. The protein is Phosphoglycerate kinase of Xanthomonas oryzae pv. oryzae (strain MAFF 311018).